The primary structure comprises 770 residues: Potassium transporter 25 (770 aa).

At 1–23 (MDLEAAHGAAAAPGKRRRRARES) the chain is on the cytoplasmic side. Residues 24–44 (WGASLLLAYQSLGVVYGDVAT) traverse the membrane as a helical segment. The Extracellular portion of the chain corresponds to 45 to 70 (SPLYVYKSAFAGDDIQHSAGNEEIYG). The chain crosses the membrane as a helical span at residues 71–91 (VLSFVFWTLTLISLVKYVLIV). Residues 92-152 (LRADDGGEGG…MLERYRVLQR (61 aa)) are Cytoplasmic-facing. Residues 153–173 (LLLLFALLGTCMVIGDGVLTP) form a helical membrane-spanning segment. The Extracellular portion of the chain corresponds to 174 to 194 (AVSVYSAVSGLELSMEHEHHK). Residues 195 to 215 (YVQLPVTCAILIGLFALQHYG) form a helical membrane-spanning segment. The Cytoplasmic segment spans residues 216–218 (THR). A helical transmembrane segment spans residues 219–239 (VGFIFAPIVCVWLLCISAIGV). Residues 240–267 (YNIVHWNHHVYRALSPYYMYQFLKKTQT) lie on the Extracellular side of the membrane. A helical membrane pass occupies residues 268–288 (GGWMSLGGILLCVTGSEAMYA). Residues 289–299 (DLGHFSQSSIK) lie on the Cytoplasmic side of the membrane. The chain crosses the membrane as a helical span at residues 300–320 (IAFMSVVYPALVLAYMGQAAY). Topologically, residues 321 to 346 (ISQHHSFENAYHIGFYVSVPEKLRWP) are extracellular. The helical transmembrane segment at 347 to 367 (VLVIAILAAVVGSQAVITGTF) threads the bilayer. Topologically, residues 368 to 394 (SIIKQCSSLSCFPGVKIVHTSSTVHGQ) are cytoplasmic. The helical transmembrane segment at 395–415 (IYIPEINWILMILCLAVTLGF) threads the bilayer. Residues 416–425 (RNTKHLANAQ) lie on the Extracellular side of the membrane. A helical transmembrane segment spans residues 426–446 (GLAVITVMLVTTCLMSLVIVL). At 447-451 (CWNKS) the chain is on the cytoplasmic side. The chain crosses the membrane as a helical span at residues 452 to 472 (IFLALGFLIFFGTIEVLYFSA). Topologically, residues 473 to 479 (SLVKFHE) are extracellular. A helical membrane pass occupies residues 480 to 500 (GAWVPITLSFIFMIVMCVWHY). The Cytoplasmic portion of the chain corresponds to 501 to 770 (GTIKKYEFDF…TLEVGMVYQV (270 aa)).

This sequence belongs to the HAK/KUP transporter (TC 2.A.72.3) family.

The protein resides in the membrane. Its function is as follows. High-affinity potassium transporter. This is Potassium transporter 25 (HAK25) from Oryza sativa subsp. japonica (Rice).